The chain runs to 556 residues: Formate--tetrahydrofolate ligase (556 aa).

Position 65-72 (65-72 (TPAGEGKS)) interacts with ATP.

Belongs to the formate--tetrahydrofolate ligase family.

It catalyses the reaction (6S)-5,6,7,8-tetrahydrofolate + formate + ATP = (6R)-10-formyltetrahydrofolate + ADP + phosphate. The protein operates within one-carbon metabolism; tetrahydrofolate interconversion. This chain is Formate--tetrahydrofolate ligase, found in Streptococcus suis (strain 98HAH33).